A 443-amino-acid chain; its full sequence is Eukaryotic translation initiation factor 3 subunit M (443 aa).

The PCI domain maps to 205–375; it reads GLYQSTGNLA…SLIRIHSISS (171 aa). Residues 413–443 form a disordered region; that stretch reads ETVAQQGLGQQRRGGKRREEKKEKEDKEEQE. A compositionally biased stretch (basic and acidic residues) spans 429–443; sequence RREEKKEKEDKEEQE.

This sequence belongs to the eIF-3 subunit M family. Component of the eukaryotic translation initiation factor 3 (eIF-3) complex.

The protein resides in the cytoplasm. Functionally, component of the eukaryotic translation initiation factor 3 (eIF-3) complex, which is involved in protein synthesis of a specialized repertoire of mRNAs and, together with other initiation factors, stimulates binding of mRNA and methionyl-tRNAi to the 40S ribosome. The eIF-3 complex specifically targets and initiates translation of a subset of mRNAs involved in cell proliferation. This chain is Eukaryotic translation initiation factor 3 subunit M, found in Cryptococcus neoformans var. neoformans serotype D (strain B-3501A) (Filobasidiella neoformans).